Reading from the N-terminus, the 151-residue chain is Small ribosomal subunit protein uS15 (151 aa).

The disordered stretch occupies residues 1 to 20 (MARLHSGKRGSSGSTRPLRT).

This sequence belongs to the universal ribosomal protein uS15 family. As to quaternary structure, part of the 30S ribosomal subunit.

In Methanococcus aeolicus (strain ATCC BAA-1280 / DSM 17508 / OCM 812 / Nankai-3), this protein is Small ribosomal subunit protein uS15.